The chain runs to 312 residues: Lichenase-2 (312 aa).

The first 6 residues, 1 to 6, serve as a signal peptide directing secretion; that stretch reads PPSVES. The active-site Proton donor is the E99. N196 carries an N-linked (GlcNAc...) asparagine glycan. Residue E238 is the Nucleophile of the active site.

This sequence belongs to the glycosyl hydrolase 17 family.

It carries out the reaction Hydrolysis of (1-&gt;4)-beta-D-glucosidic linkages in beta-D-glucans containing (1-&gt;3)- and (1-&gt;4)-bonds.. The protein operates within glycan metabolism; beta-D-glucan degradation. Functionally, functions in plant cell wall hydrolysis during mobilization of the endosperm in germinating grain or during the growth of vegetative tissues. This Hordeum vulgare (Barley) protein is Lichenase-2.